A 476-amino-acid chain; its full sequence is MTALDIIIMAAGKGTRMKSRIPKVLQRLAGRPLLHHVLGQAASLQARRVVVVTGHGATEVEAACAGSAGVGGTFDLKFVRQEPQLGTGHAVQQATPALAGDGTVVVLSGDVPLTQAATLRALVEAGAGERLALLTVRLPDPTGYGRIVRGEGGTVQRIVEHKDANDAERAIDEVYSGIMAVPAQRLAGWLARLTNDNAQGEYYLTDIVSMAVADGVPVAAHCIGDALQVAGVNSPAQLADLERAHQRAQAAALMEQGVRLADPARFDLRDDARSGARGEILCAQDVEIDVGCIFTGRVELGEGARIGAYCHISNATIAAGAVVHPFTHIDGEKTGAHVGEGALIGPFARLRPGAQLGREVHIGNFVEVKNSTLADGAKANHLAYLGDASVGERVNYGAGSITANYDGANKHRTVIEADVHIGSNCVLVAPVTIGAGGTVGGGSTITKDTPPGGLSVARGRQVSIANWKRPAKQAKG.

The interval 1-235 (MTALDIIIMA…ALQVAGVNSP (235 aa)) is pyrophosphorylase. Residues Lys-23, Gln-81, 86-87 (GT), 108-110 (SGD), Gly-145, Glu-160, and Asn-233 each bind UDP-N-acetyl-alpha-D-glucosamine. Asp-110 provides a ligand contact to Mg(2+). Asn-233 is a Mg(2+) binding site. The tract at residues 236–256 (AQLADLERAHQRAQAAALMEQ) is linker. An N-acetyltransferase region spans residues 257 to 476 (GVRLADPARF…WKRPAKQAKG (220 aa)). Positions 351 and 369 each coordinate UDP-N-acetyl-alpha-D-glucosamine. The active-site Proton acceptor is the His-381. The UDP-N-acetyl-alpha-D-glucosamine site is built by Tyr-384 and Asn-395. Acetyl-CoA-binding positions include Ala-398, 404–405 (NY), Ser-423, Gly-441, and Arg-458.

The protein in the N-terminal section; belongs to the N-acetylglucosamine-1-phosphate uridyltransferase family. It in the C-terminal section; belongs to the transferase hexapeptide repeat family. As to quaternary structure, homotrimer. Mg(2+) serves as cofactor.

The protein resides in the cytoplasm. The catalysed reaction is alpha-D-glucosamine 1-phosphate + acetyl-CoA = N-acetyl-alpha-D-glucosamine 1-phosphate + CoA + H(+). It carries out the reaction N-acetyl-alpha-D-glucosamine 1-phosphate + UTP + H(+) = UDP-N-acetyl-alpha-D-glucosamine + diphosphate. Its pathway is nucleotide-sugar biosynthesis; UDP-N-acetyl-alpha-D-glucosamine biosynthesis; N-acetyl-alpha-D-glucosamine 1-phosphate from alpha-D-glucosamine 6-phosphate (route II): step 2/2. It functions in the pathway nucleotide-sugar biosynthesis; UDP-N-acetyl-alpha-D-glucosamine biosynthesis; UDP-N-acetyl-alpha-D-glucosamine from N-acetyl-alpha-D-glucosamine 1-phosphate: step 1/1. The protein operates within bacterial outer membrane biogenesis; LPS lipid A biosynthesis. Its function is as follows. Catalyzes the last two sequential reactions in the de novo biosynthetic pathway for UDP-N-acetylglucosamine (UDP-GlcNAc). The C-terminal domain catalyzes the transfer of acetyl group from acetyl coenzyme A to glucosamine-1-phosphate (GlcN-1-P) to produce N-acetylglucosamine-1-phosphate (GlcNAc-1-P), which is converted into UDP-GlcNAc by the transfer of uridine 5-monophosphate (from uridine 5-triphosphate), a reaction catalyzed by the N-terminal domain. This is Bifunctional protein GlmU from Acidovorax sp. (strain JS42).